The chain runs to 219 residues: Probable GTP-binding protein EngB (219 aa).

The EngB-type G domain occupies 33–217; it reads GPLEIAFAGR…RAAICETVGH (185 aa). GTP is bound by residues 41–48, 68–72, 95–98, 162–165, and 196–198; these read GRSNVGKS, GRTQE, DMPG, TKTD, and TSS. Mg(2+) is bound by residues serine 48 and threonine 70.

It belongs to the TRAFAC class TrmE-Era-EngA-EngB-Septin-like GTPase superfamily. EngB GTPase family. Mg(2+) serves as cofactor.

Necessary for normal cell division and for the maintenance of normal septation. This Allorhizobium ampelinum (strain ATCC BAA-846 / DSM 112012 / S4) (Agrobacterium vitis (strain S4)) protein is Probable GTP-binding protein EngB.